The sequence spans 370 residues: Phosphoserine aminotransferase (370 aa).

Arginine 38 contributes to the L-glutamate binding site. Pyridoxal 5'-phosphate-binding residues include tryptophan 101, threonine 143, aspartate 166, and glutamine 189. Lysine 190 is subject to N6-(pyridoxal phosphate)lysine. 243–244 (NT) lines the pyridoxal 5'-phosphate pocket.

This sequence belongs to the class-V pyridoxal-phosphate-dependent aminotransferase family. SerC subfamily. As to quaternary structure, homodimer. It depends on pyridoxal 5'-phosphate as a cofactor.

The protein localises to the cytoplasm. The enzyme catalyses O-phospho-L-serine + 2-oxoglutarate = 3-phosphooxypyruvate + L-glutamate. It carries out the reaction 4-(phosphooxy)-L-threonine + 2-oxoglutarate = (R)-3-hydroxy-2-oxo-4-phosphooxybutanoate + L-glutamate. It functions in the pathway amino-acid biosynthesis; L-serine biosynthesis; L-serine from 3-phospho-D-glycerate: step 2/3. It participates in cofactor biosynthesis; pyridoxine 5'-phosphate biosynthesis; pyridoxine 5'-phosphate from D-erythrose 4-phosphate: step 3/5. Catalyzes the reversible conversion of 3-phosphohydroxypyruvate to phosphoserine and of 3-hydroxy-2-oxo-4-phosphonooxybutanoate to phosphohydroxythreonine. This Methanosarcina mazei (strain ATCC BAA-159 / DSM 3647 / Goe1 / Go1 / JCM 11833 / OCM 88) (Methanosarcina frisia) protein is Phosphoserine aminotransferase.